We begin with the raw amino-acid sequence, 288 residues long: ATP synthase gamma chain (288 aa).

This sequence belongs to the ATPase gamma chain family. As to quaternary structure, F-type ATPases have 2 components, CF(1) - the catalytic core - and CF(0) - the membrane proton channel. CF(1) has five subunits: alpha(3), beta(3), gamma(1), delta(1), epsilon(1). CF(0) has three main subunits: a, b and c.

The protein resides in the cell inner membrane. In terms of biological role, produces ATP from ADP in the presence of a proton gradient across the membrane. The gamma chain is believed to be important in regulating ATPase activity and the flow of protons through the CF(0) complex. The sequence is that of ATP synthase gamma chain from Legionella pneumophila (strain Corby).